The chain runs to 371 residues: 3-isopropylmalate dehydrogenase (371 aa).

Residue 77-90 (GPKWDDNPPHLRPE) participates in NAD(+) binding. Substrate contacts are provided by Arg97, Arg107, Arg135, and Asp224. Positions 224, 248, and 252 each coordinate Mg(2+). 282–294 (GSAPDIAGMNKAN) is a binding site for NAD(+).

Belongs to the isocitrate and isopropylmalate dehydrogenases family. LeuB type 1 subfamily. Homodimer. It depends on Mg(2+) as a cofactor. Mn(2+) is required as a cofactor.

The protein localises to the cytoplasm. The enzyme catalyses (2R,3S)-3-isopropylmalate + NAD(+) = 4-methyl-2-oxopentanoate + CO2 + NADH. It functions in the pathway amino-acid biosynthesis; L-leucine biosynthesis; L-leucine from 3-methyl-2-oxobutanoate: step 3/4. In terms of biological role, catalyzes the oxidation of 3-carboxy-2-hydroxy-4-methylpentanoate (3-isopropylmalate) to 3-carboxy-4-methyl-2-oxopentanoate. The product decarboxylates to 4-methyl-2 oxopentanoate. The sequence is that of 3-isopropylmalate dehydrogenase from Geobacillus kaustophilus (strain HTA426).